Reading from the N-terminus, the 276-residue chain is Polyamine aminopropyltransferase (276 aa).

Residues 3 to 236 (ELWYTEKQTK…GLWTFTIGSK (234 aa)) form the PABS domain. Residue Q32 coordinates S-methyl-5'-thioadenosine. Spermidine is bound by residues H63 and D87. Residues D107 and 138 to 139 (DG) contribute to the S-methyl-5'-thioadenosine site. The active-site Proton acceptor is D156. Residue 156-159 (DSTE) coordinates spermidine. P163 serves as a coordination point for S-methyl-5'-thioadenosine.

Belongs to the spermidine/spermine synthase family. Homodimer or homotetramer.

It localises to the cytoplasm. The enzyme catalyses S-adenosyl 3-(methylsulfanyl)propylamine + putrescine = S-methyl-5'-thioadenosine + spermidine + H(+). Its pathway is amine and polyamine biosynthesis; spermidine biosynthesis; spermidine from putrescine: step 1/1. Functionally, involved in the cell growth and proliferation. Catalyzes the irreversible transfer of a propylamine group from the amino donor S-adenosylmethioninamine (decarboxy-AdoMet) to putrescine (1,4-diaminobutane) to yield spermidine. In Bacillus subtilis (strain 168), this protein is Polyamine aminopropyltransferase.